Consider the following 261-residue polypeptide: Small ribosomal subunit protein uS2 (261 aa).

The residue at position 2 (Ser-2) is an N-acetylserine. The disordered stretch occupies residues 212–261 (QNAAEEAKAEETEEAPAAEAETEWTGETDDVDWADSGATPAAEDAAASNW). The segment covering 222–244 (ETEEAPAAEAETEWTGETDDVDW) has biased composition (acidic residues).

Belongs to the universal ribosomal protein uS2 family. Component of the small ribosomal subunit. Mature ribosomes consist of a small (40S) and a large (60S) subunit. The 40S subunit contains about 33 different proteins and 1 molecule of RNA (18S). The 60S subunit contains about 49 different proteins and 3 molecules of RNA (25S, 5.8S and 5S). Interacts with RPS21.

Its subcellular location is the cytoplasm. Its function is as follows. Required for the assembly and/or stability of the 40S ribosomal subunit. Required for the processing of the 20S rRNA-precursor to mature 18S rRNA in a late step of the maturation of 40S ribosomal subunits. The protein is Small ribosomal subunit protein uS2 of Candida tropicalis (Yeast).